The chain runs to 288 residues: Bifunctional protein FolD (288 aa).

NADP(+)-binding positions include G166 to S168, S191, and V232.

This sequence belongs to the tetrahydrofolate dehydrogenase/cyclohydrolase family. In terms of assembly, homodimer.

The catalysed reaction is (6R)-5,10-methylene-5,6,7,8-tetrahydrofolate + NADP(+) = (6R)-5,10-methenyltetrahydrofolate + NADPH. It catalyses the reaction (6R)-5,10-methenyltetrahydrofolate + H2O = (6R)-10-formyltetrahydrofolate + H(+). It participates in one-carbon metabolism; tetrahydrofolate interconversion. Catalyzes the oxidation of 5,10-methylenetetrahydrofolate to 5,10-methenyltetrahydrofolate and then the hydrolysis of 5,10-methenyltetrahydrofolate to 10-formyltetrahydrofolate. The sequence is that of Bifunctional protein FolD from Roseiflexus sp. (strain RS-1).